Here is a 118-residue protein sequence, read N- to C-terminus: Ribosome-binding factor A (118 aa).

It belongs to the RbfA family. As to quaternary structure, monomer. Binds 30S ribosomal subunits, but not 50S ribosomal subunits or 70S ribosomes.

The protein localises to the cytoplasm. Its function is as follows. One of several proteins that assist in the late maturation steps of the functional core of the 30S ribosomal subunit. Associates with free 30S ribosomal subunits (but not with 30S subunits that are part of 70S ribosomes or polysomes). Required for efficient processing of 16S rRNA. May interact with the 5'-terminal helix region of 16S rRNA. The sequence is that of Ribosome-binding factor A from Bacillus cereus (strain B4264).